Consider the following 609-residue polypeptide: UvrABC system protein C (609 aa).

Positions 16–94 (HLPGVYRHLD…IKSLRPRYNI (79 aa)) constitute a GIY-YIG domain. A UVR domain is found at 203-238 (REVMDEIEARMLQASTELRFEEAAVLRDQMGSLSKV).

The protein belongs to the UvrC family. As to quaternary structure, interacts with UvrB in an incision complex.

Its subcellular location is the cytoplasm. Functionally, the UvrABC repair system catalyzes the recognition and processing of DNA lesions. UvrC both incises the 5' and 3' sides of the lesion. The N-terminal half is responsible for the 3' incision and the C-terminal half is responsible for the 5' incision. The polypeptide is UvrABC system protein C (Bordetella pertussis (strain Tohama I / ATCC BAA-589 / NCTC 13251)).